A 359-amino-acid chain; its full sequence is 3-dehydroquinate synthase (359 aa).

NAD(+) is bound by residues 71-76, 105-109, 129-130, Lys142, and Lys151; these read DGEAYK, GVIGD, and TT. Zn(2+)-binding residues include Glu184, His247, and His264.

Belongs to the sugar phosphate cyclases superfamily. Dehydroquinate synthase family. Requires Co(2+) as cofactor. Zn(2+) is required as a cofactor. The cofactor is NAD(+).

The protein localises to the cytoplasm. The enzyme catalyses 7-phospho-2-dehydro-3-deoxy-D-arabino-heptonate = 3-dehydroquinate + phosphate. The protein operates within metabolic intermediate biosynthesis; chorismate biosynthesis; chorismate from D-erythrose 4-phosphate and phosphoenolpyruvate: step 2/7. Functionally, catalyzes the conversion of 3-deoxy-D-arabino-heptulosonate 7-phosphate (DAHP) to dehydroquinate (DHQ). In Burkholderia ambifaria (strain ATCC BAA-244 / DSM 16087 / CCUG 44356 / LMG 19182 / AMMD) (Burkholderia cepacia (strain AMMD)), this protein is 3-dehydroquinate synthase.